The primary structure comprises 906 residues: Catenin alpha-1 (906 aa).

Residue T2 is modified to N-acetylthreonine. The segment at 2–228 (TAVHTGNINF…PILYTASQAC (227 aa)) is involved in homodimerization. K57 participates in a covalent cross-link: Glycyl lysine isopeptide (Lys-Gly) (interchain with G-Cter in SUMO2). An interaction with JUP and CTNNB1 region spans residues 97-148 (VRKQCDLMKSAAGEFADDPCSSVKRGNMVRAARALLSAVTRLLILADMADVY). Residues S264, S268, S295, and S297 each carry the phosphoserine modification. Positions 325–394 (TRDDRRERIV…AVMDHVSDSF (70 aa)) are interaction with alpha-actinin. Position 634 is a phosphothreonine (T634). S641 is modified (phosphoserine). T645 bears the Phosphothreonine mark. Phosphoserine is present on residues S652 and S655. At T658 the chain carries Phosphothreonine. K797 is covalently cross-linked (Glycyl lysine isopeptide (Lys-Gly) (interchain with G-Cter in SUMO2)). Residue S851 is modified to Phosphoserine. The segment covering 864-880 (PEKKPLVKREKQDETQT) has biased composition (basic and acidic residues). A disordered region spans residues 864–894 (PEKKPLVKREKQDETQTKIKRASQKKHVNPV). Over residues 881–891 (KIKRASQKKHV) the composition is skewed to basic residues.

The protein belongs to the vinculin/alpha-catenin family. As to quaternary structure, monomer and homodimer; the monomer preferentially binds to CTNNB1 and the homodimer to actin. Component of an cadherin:catenin adhesion complex composed of at least of CDH26, beta-catenin/CTNNB1, alpha-catenin/CTNNA1 and p120 catenin/CTNND1. Possible component of an E-cadherin/ catenin adhesion complex together with E-cadherin/CDH1 and beta-catenin/CTNNB1 or gamma-catenin/JUP; the complex is located to adherens junctions. The stable association of CTNNA1 is controversial as CTNNA1 was shown not to bind to F-actin when assembled in the complex. Alternatively, the CTNNA1-containing complex may be linked to F-actin by other proteins such as LIMA1. Binds AFDN and F-actin. Interacts with ARHGAP21. Interacts with AJUBA. Interacts with LIMA1. Interacts with vinculin/VCL. Interacts with TJP2/ZO2 (via N-terminus). Interacts with TJP1/ZO1 (via N-terminus). In terms of processing, sumoylated. Post-translationally, phosphorylation seems to contribute to the strength of cell-cell adhesion rather than to the basic capacity for cell-cell adhesion.

It is found in the cytoplasm. Its subcellular location is the cytoskeleton. It localises to the cell junction. The protein resides in the adherens junction. The protein localises to the cell membrane. It is found in the nucleus. Associates with the cytoplasmic domain of a variety of cadherins. The association of catenins to cadherins produces a complex which is linked to the actin filament network, and which seems to be of primary importance for cadherins cell-adhesion properties. Can associate with both E- and N-cadherins. Originally believed to be a stable component of E-cadherin/catenin adhesion complexes and to mediate the linkage of cadherins to the actin cytoskeleton at adherens junctions. In contrast, cortical actin was found to be much more dynamic than E-cadherin/catenin complexes and CTNNA1 was shown not to bind to F-actin when assembled in the complex suggesting a different linkage between actin and adherens junctions components. The homodimeric form may regulate actin filament assembly and inhibit actin branching by competing with the Arp2/3 complex for binding to actin filaments. Involved in the regulation of WWTR1/TAZ, YAP1 and TGFB1-dependent SMAD2 and SMAD3 nuclear accumulation. May play a crucial role in cell differentiation. The chain is Catenin alpha-1 from Bos taurus (Bovine).